The primary structure comprises 1070 residues: DNA-directed RNA polymerase subunit beta (1070 aa).

Belongs to the RNA polymerase beta chain family. In plastids the minimal PEP RNA polymerase catalytic core is composed of four subunits: alpha, beta, beta', and beta''. When a (nuclear-encoded) sigma factor is associated with the core the holoenzyme is formed, which can initiate transcription.

Its subcellular location is the plastid. The protein localises to the chloroplast. It carries out the reaction RNA(n) + a ribonucleoside 5'-triphosphate = RNA(n+1) + diphosphate. DNA-dependent RNA polymerase catalyzes the transcription of DNA into RNA using the four ribonucleoside triphosphates as substrates. The polypeptide is DNA-directed RNA polymerase subunit beta (Cucumis sativus (Cucumber)).